Consider the following 234-residue polypeptide: MHFSPALKSGKLLKRYKRFLADIQLEDGTEITLHCPNTGSMRNCLFPGETVWFSTSNNPKRKYAHTWELMTTPTGGLIGIHSGNANALVEEALNKGVITELVGYDSLSREVKYGDENSRIDILLEAAQKPACYIEVKSCTLLEDGQGYFPDAVSLRGQKHLRELMHMASLGHRAVLLFVVQHTDIHSVAPAAHIDPEYANLLKKAVLSGVEVLAYRCEISASEIHLAHACPVRV.

Belongs to the SfsA family.

The chain is Sugar fermentation stimulation protein homolog from Shewanella sp. (strain ANA-3).